The following is a 612-amino-acid chain: BTB/POZ domain-containing protein 9 (612 aa).

The BTB domain maps to 36 to 104 (GDVTFVVEKK…IYTGRATLTD (69 aa)). One can recognise a BACK domain in the interval 142-240 (VCMTFDVASL…SLTELLNVVR (99 aa)). The segment at 559–612 (QQSTQKEDSSEEPGTGDLSTPSQQLDPHAPRAPSASSLPPSPGPNLHSPNQQNQ) is disordered. The span at 589–612 (RAPSASSLPPSPGPNLHSPNQQNQ) shows a compositional bias: low complexity.

Detected throughout the gray matter of the spinal cord including the motor neurons (at protein level). In the brain, detected in the neurons of the hippocampus and in the Purkinje cells of the cerebellum (at protein level). Also detected in the terospenial cortex, bed nucleus of the stria terminalis (BST) and the ventrolateral thalamus (VL) (at protein level).

The polypeptide is BTB/POZ domain-containing protein 9 (Btbd9) (Rattus norvegicus (Rat)).